A 158-amino-acid chain; its full sequence is 2-amino-4-hydroxy-6-hydroxymethyldihydropteridine pyrophosphokinase (158 aa).

It belongs to the HPPK family.

It catalyses the reaction 6-hydroxymethyl-7,8-dihydropterin + ATP = (7,8-dihydropterin-6-yl)methyl diphosphate + AMP + H(+). Its pathway is cofactor biosynthesis; tetrahydrofolate biosynthesis; 2-amino-4-hydroxy-6-hydroxymethyl-7,8-dihydropteridine diphosphate from 7,8-dihydroneopterin triphosphate: step 4/4. In terms of biological role, catalyzes the transfer of pyrophosphate from adenosine triphosphate (ATP) to 6-hydroxymethyl-7,8-dihydropterin, an enzymatic step in folate biosynthesis pathway. This Methylorubrum extorquens (strain ATCC 14718 / DSM 1338 / JCM 2805 / NCIMB 9133 / AM1) (Methylobacterium extorquens) protein is 2-amino-4-hydroxy-6-hydroxymethyldihydropteridine pyrophosphokinase (folK).